The following is a 902-amino-acid chain: Translation initiation factor IF-2 (902 aa).

A compositionally biased stretch (basic and acidic residues) spans 137-177 (NLDEQQRLAESDRARDEAIQRKRDEEQAAKDRVEAERKAAE). Disordered regions lie at residues 137–248 (NLDE…SHVM) and 266–314 (HLSA…ERPT). Composition is skewed to low complexity over residues 178–229 (EAAA…ATPA) and 279–291 (RGKP…SSSS). Residues 401–570 (SRPPVVTIMG…SLQAEVLELK (170 aa)) enclose the tr-type G domain. The tract at residues 410 to 417 (GHVDHGKT) is G1. 410–417 (GHVDHGKT) is a GTP binding site. A G2 region spans residues 435 to 439 (GITQH). The G3 stretch occupies residues 456-459 (DTPG). GTP contacts are provided by residues 456–460 (DTPGH) and 510–513 (NKID). The segment at 510–513 (NKID) is G4. Residues 546–548 (SAK) are G5.

It belongs to the TRAFAC class translation factor GTPase superfamily. Classic translation factor GTPase family. IF-2 subfamily.

It localises to the cytoplasm. Its function is as follows. One of the essential components for the initiation of protein synthesis. Protects formylmethionyl-tRNA from spontaneous hydrolysis and promotes its binding to the 30S ribosomal subunits. Also involved in the hydrolysis of GTP during the formation of the 70S ribosomal complex. In Xanthomonas campestris pv. campestris (strain 8004), this protein is Translation initiation factor IF-2.